The chain runs to 194 residues: Thymidine kinase (194 aa).

Residues 15–22 (GSMFSGKS) and 88–91 (DEVQ) contribute to the ATP site. The active-site Proton acceptor is Glu-89. Residues Cys-145, Cys-148, Cys-183, and His-186 each coordinate Zn(2+).

The protein belongs to the thymidine kinase family. In terms of assembly, homotetramer.

The protein resides in the cytoplasm. It catalyses the reaction thymidine + ATP = dTMP + ADP + H(+). The sequence is that of Thymidine kinase from Bacillus licheniformis (strain ATCC 14580 / DSM 13 / JCM 2505 / CCUG 7422 / NBRC 12200 / NCIMB 9375 / NCTC 10341 / NRRL NRS-1264 / Gibson 46).